A 329-amino-acid polypeptide reads, in one-letter code: Deoxyhypusine hydroxylase (329 aa).

HEAT-like PBS-type repeat units follow at residues 65 to 91 (LKHELAYCLGQSGHDAAIAPLRGVLED), 99 to 124 (RHEAAEALGALSDKGSLELLKKMRDD), 232 to 258 (FRHEIAFVFGQLSHPASIPSLTEALSN), and 265 to 292 (VRHEAAEALGSLGDEEGVEETLKKFLND). 8 residues coordinate Fe cation: histidine 67, glutamate 68, histidine 100, glutamate 101, histidine 234, glutamate 235, histidine 267, and glutamate 268.

It belongs to the deoxyhypusine hydroxylase family. Requires Fe(2+) as cofactor.

It is found in the cytoplasm. It localises to the nucleus. The enzyme catalyses [eIF5A protein]-deoxyhypusine + AH2 + O2 = [eIF5A protein]-hypusine + A + H2O. Its pathway is protein modification; eIF5A hypusination. Catalyzes the hydroxylation of the N(6)-(4-aminobutyl)-L-lysine intermediate to form hypusine, an essential post-translational modification only found in mature eIF-5A factor. The protein is Deoxyhypusine hydroxylase of Phaeosphaeria nodorum (strain SN15 / ATCC MYA-4574 / FGSC 10173) (Glume blotch fungus).